The following is a 468-amino-acid chain: ATP synthase subunit beta (468 aa).

ATP is bound at residue 155–162 (GGAGVGKT).

The protein belongs to the ATPase alpha/beta chains family. As to quaternary structure, F-type ATPases have 2 components, CF(1) - the catalytic core - and CF(0) - the membrane proton channel. CF(1) has five subunits: alpha(3), beta(3), gamma(1), delta(1), epsilon(1). CF(0) has three main subunits: a(1), b(2) and c(9-12). The alpha and beta chains form an alternating ring which encloses part of the gamma chain. CF(1) is attached to CF(0) by a central stalk formed by the gamma and epsilon chains, while a peripheral stalk is formed by the delta and b chains.

Its subcellular location is the cell membrane. It carries out the reaction ATP + H2O + 4 H(+)(in) = ADP + phosphate + 5 H(+)(out). Its function is as follows. Produces ATP from ADP in the presence of a proton gradient across the membrane. The catalytic sites are hosted primarily by the beta subunits. The sequence is that of ATP synthase subunit beta from Streptococcus pneumoniae serotype 19F (strain G54).